A 648-amino-acid chain; its full sequence is 5-aminolevulinate synthase, mitochondrial (648 aa).

Residues 1 to 26 (MEALLQQSRAMCPFLKRSSPNTLRSL) constitute a mitochondrion transit peptide. The interval 69–109 (KRFTSSAAGVPGAGAGTPKPTRGSPGKRALHSTGGNGANMS) is disordered. Residues arginine 170, serine 283, and lysine 302 each contribute to the substrate site. Serine 335, histidine 363, and threonine 409 together coordinate pyridoxal 5'-phosphate. Residue lysine 412 is part of the active site. Lysine 412 is subject to N6-(pyridoxal phosphate)lysine. Pyridoxal 5'-phosphate is bound by residues threonine 441 and threonine 442. Threonine 527 contributes to the substrate binding site.

This sequence belongs to the class-II pyridoxal-phosphate-dependent aminotransferase family. As to quaternary structure, homodimer. Pyridoxal 5'-phosphate is required as a cofactor.

Its subcellular location is the mitochondrion matrix. It catalyses the reaction succinyl-CoA + glycine + H(+) = 5-aminolevulinate + CO2 + CoA. The protein operates within porphyrin-containing compound metabolism; protoporphyrin-IX biosynthesis; 5-aminolevulinate from glycine: step 1/1. Functionally, catalyzes the synthesis of 5-aminolevulinate (ALA) from succinyl-CoA and glycine, the first and rate-limiting step in heme biosynthesis. The sequence is that of 5-aminolevulinate synthase, mitochondrial (hemA) from Emericella nidulans (strain FGSC A4 / ATCC 38163 / CBS 112.46 / NRRL 194 / M139) (Aspergillus nidulans).